The sequence spans 85 residues: U4-theraphotoxin-Hhn1a (85 aa).

An N-terminal signal peptide occupies residues 1-22 (MKVTLIAILTCAAVLVLHTTAA). Positions 23-48 (EELEAEGQLMEVGMPDTELAAVDEER) are excised as a propeptide. 3 disulfides stabilise this stretch: Cys-52/Cys-66, Cys-56/Cys-77, and Cys-71/Cys-82.

It belongs to the neurotoxin 12 (Hwtx-2) family. 02 (Hwtx-2) subfamily. Monomer. As to expression, expressed by the venom gland.

It localises to the secreted. Its function is as follows. Neurotoxin active on both insects and mammals. The sequence is that of U4-theraphotoxin-Hhn1a from Cyriopagopus hainanus (Chinese bird spider).